The primary structure comprises 240 residues: UDP-2,3-diacylglucosamine hydrolase (240 aa).

Mn(2+) contacts are provided by D8, H10, D41, N79, and H114. 79–80 is a binding site for substrate; it reads NR. The substrate site is built by D122, S160, N164, K167, and H195. Residues H195 and H197 each coordinate Mn(2+).

The protein belongs to the LpxH family. Mn(2+) is required as a cofactor.

Its subcellular location is the cell inner membrane. The catalysed reaction is UDP-2-N,3-O-bis[(3R)-3-hydroxytetradecanoyl]-alpha-D-glucosamine + H2O = 2-N,3-O-bis[(3R)-3-hydroxytetradecanoyl]-alpha-D-glucosaminyl 1-phosphate + UMP + 2 H(+). It functions in the pathway glycolipid biosynthesis; lipid IV(A) biosynthesis; lipid IV(A) from (3R)-3-hydroxytetradecanoyl-[acyl-carrier-protein] and UDP-N-acetyl-alpha-D-glucosamine: step 4/6. Functionally, hydrolyzes the pyrophosphate bond of UDP-2,3-diacylglucosamine to yield 2,3-diacylglucosamine 1-phosphate (lipid X) and UMP by catalyzing the attack of water at the alpha-P atom. Involved in the biosynthesis of lipid A, a phosphorylated glycolipid that anchors the lipopolysaccharide to the outer membrane of the cell. This is UDP-2,3-diacylglucosamine hydrolase from Pectobacterium atrosepticum (strain SCRI 1043 / ATCC BAA-672) (Erwinia carotovora subsp. atroseptica).